A 708-amino-acid polypeptide reads, in one-letter code: Capsid scaffolding protein (708 aa).

Active-site charge relay system residues include H63, S132, and H157. 3 disordered regions span residues 270–339 (SAER…MSHP), 455–565 (HPSY…QQQR), and 593–620 (ALPS…GGGE). A compositionally biased stretch (low complexity) spans 284–293 (PAAGARVPSS). Residues 294 to 311 (SPSPPVEPPSPVQPPALP) show a composition bias toward pro residues. Residues 326–339 (SPSEPAEAASMSHP) show a composition bias toward low complexity. The interval 333–352 (AASMSHPLSAAVPAATAPPG) is interaction with pAP. Residues 498 to 513 (KQHRHGGSGGHNKRRK) are compositionally biased toward basic residues. Short sequence motifs (nuclear localization signal) lie at residues 510–515 (KRRKET) and 537–543 (RARKRLK). The span at 593-615 (ALPSAASSSPTTTTVCTPTSELT) shows a compositional bias: low complexity. The segment at 688 to 708 (PPKDMVDLNRRIFVAALNKLE) is interaction with major capsid protein.

The protein belongs to the herpesviridae capsid scaffolding protein family. In terms of assembly, homomultimer. Interacts with major capsid protein. Exists in a monomer-dimer equilibrium with the dimer being the active species. Capsid scaffolding protein is cleaved by assemblin after formation of the spherical procapsid. As a result, the capsid obtains its mature, icosahedral shape. Cleavages occur at two or more sites: release (R-site) and maturation (M-site).

Its subcellular location is the host cytoplasm. The protein resides in the host nucleus. It catalyses the reaction Cleaves -Ala-|-Ser- and -Ala-|-Ala- bonds in the scaffold protein.. In terms of biological role, acts as a scaffold protein by binding major capsid protein in the cytoplasm, inducing the nuclear localization of both proteins. Multimerizes in the nucleus such as major capsid protein forms the icosahedral T=16 capsid. Autocatalytic cleavage releases the assembly protein, and subsequently abolishes interaction with major capsid protein. Cleavages products are evicted from the capsid before or during DNA packaging. Its function is as follows. Protease that plays an essential role in virion assembly within the nucleus. Catalyzes the cleavage of the assembly protein after formation of the spherical procapsid. By that cleavage, the capsid matures and gains its icosahedral shape. The cleavage sites seem to include -Ala-Ser-, -Ala-Ala-, as well as Ala-Thr bonds. Assemblin and cleavages products are evicted from the capsid before or during DNA packaging. Plays a major role in capsid assembly. Acts as a scaffold protein by binding major capsid protein. Multimerizes in the nucleus such as major capsid protein forms the icosahedral T=16 capsid. Cleaved by assemblin after capsid completion. The cleavages products are evicted from the capsid before or during DNA packaging. The chain is Capsid scaffolding protein (UL80) from Homo sapiens (Human).